The sequence spans 413 residues: CinA-like protein (413 aa).

The protein belongs to the CinA family.

This Geotalea daltonii (strain DSM 22248 / JCM 15807 / FRC-32) (Geobacter daltonii) protein is CinA-like protein.